The primary structure comprises 258 residues: Aspartate/glutamate leucyltransferase (258 aa).

This sequence belongs to the R-transferase family. Bpt subfamily.

The protein resides in the cytoplasm. The catalysed reaction is N-terminal L-glutamyl-[protein] + L-leucyl-tRNA(Leu) = N-terminal L-leucyl-L-glutamyl-[protein] + tRNA(Leu) + H(+). It catalyses the reaction N-terminal L-aspartyl-[protein] + L-leucyl-tRNA(Leu) = N-terminal L-leucyl-L-aspartyl-[protein] + tRNA(Leu) + H(+). Its function is as follows. Functions in the N-end rule pathway of protein degradation where it conjugates Leu from its aminoacyl-tRNA to the N-termini of proteins containing an N-terminal aspartate or glutamate. In Rhodopseudomonas palustris (strain ATCC BAA-98 / CGA009), this protein is Aspartate/glutamate leucyltransferase.